We begin with the raw amino-acid sequence, 221 residues long: Urease accessory protein UreF (221 aa).

This sequence belongs to the UreF family. UreD, UreF and UreG form a complex that acts as a GTP-hydrolysis-dependent molecular chaperone, activating the urease apoprotein by helping to assemble the nickel containing metallocenter of UreC. The UreE protein probably delivers the nickel.

The protein localises to the cytoplasm. Functionally, required for maturation of urease via the functional incorporation of the urease nickel metallocenter. This Teredinibacter turnerae (strain ATCC 39867 / T7901) protein is Urease accessory protein UreF.